A 498-amino-acid polypeptide reads, in one-letter code: GTPase Der (498 aa).

2 consecutive EngA-type G domains span residues 3–167 (PVVA…FDDL) and 210–383 (IKLA…KSAT). GTP is bound by residues 9 to 16 (GRPNVGKS), 57 to 61 (DTGGI), 119 to 122 (NKID), 216 to 223 (GRPNVGKS), 263 to 267 (DTAGV), and 328 to 331 (NKWD). The 85-residue stretch at 384-468 (TRVGTSVLTR…PIRINFQNSE (85 aa)) folds into the KH-like domain.

It belongs to the TRAFAC class TrmE-Era-EngA-EngB-Septin-like GTPase superfamily. EngA (Der) GTPase family. As to quaternary structure, associates with the 50S ribosomal subunit.

Functionally, GTPase that plays an essential role in the late steps of ribosome biogenesis. This chain is GTPase Der, found in Vibrio parahaemolyticus serotype O3:K6 (strain RIMD 2210633).